Consider the following 801-residue polypeptide: MWTTGRMSNAKSWLGLGTSLYFWALMDLATTVLSSTPMPEVELDTLFSGKPQSHQRSRRSWVWNQFFVLEEYTGTDPLYVGKLHSDMDRGDGSIKYILSGEGAGIVFTIDDTTGDIHAIQRLDREERAQYTLRAQALDRRTGRPMEPESEFIIKIQDINDNEPKFLDGPYVATVPEMSPVGTSVIQVTATDADDPTYGNSARVVYSILQGQPYFSVDSKTGIIRTALMNMDREAKEYYEVIIQAKDMGGQLGGLAGTTTVNITLSDVNDNPPRFPQKHYQMSVLESAPVSSTVGRVFAKDLDEGINAEMKYTIVDGDGADAFDINTDPNFQVGIITVKKPLSFESKKSYTLKVEGSNPHVEMRFLNLGPFQDTTTVHIIVEDVDEPPVFEPRFYFVEVPEDVTIGTTIQIISAKDPDMTNNSIRYSIDRGSDPGRFFYVDITTGALMTARPLDREEFSWHNITVLAMEMNNPSQVGSVAATIKVLDVNDNAPEFPRFYEAFICENAKAGQLIQTVSAVDQDDPHNGQHFYYSLAPEAANNPNFTVRDNQDNTARILTRRSGFRQQEQSVFYLPILIADSGQPVLSSTGTLTIQVCSCSDDGHVMSCSPEAYMLPVSLSRGALIAILACVFVLLVLVLLILSMRRHRKQPYIIDDDENIHENIVRYDDEGGGEEDTEAFDIAAMWNPREAQAGAAPKTRQDMLPEIESLSRYVPQTCAVSSTVHSYVLAKLYEADMDLWAPPFDSLQTYMFEGDGSVAGSLSSLQSATSDSEQSFDFLTDWGPRFRKLAELYGASEGPSPLW.

Positions 1-34 (MWTTGRMSNAKSWLGLGTSLYFWALMDLATTVLS) are cleaved as a signal peptide. The propeptide occupies 35 to 59 (STPMPEVELDTLFSGKPQSHQRSRR). Topologically, residues 60-619 (SWVWNQFFVL…AYMLPVSLSR (560 aa)) are extracellular. Cadherin domains lie at 61–165 (WVWN…EPKF), 166–274 (LDGP…PPRF), 275–389 (PQKH…PPVF), 390–494 (EPRF…APEF), and 494–610 (FPRF…SPEA). A glycan (N-linked (GlcNAc...) asparagine) is linked at Asn261. Asn420, Asn461, and Asn542 each carry an N-linked (GlcNAc...) asparagine glycan. A helical transmembrane segment spans residues 620 to 640 (GALIAILACVFVLLVLVLLIL). Topologically, residues 641–801 (SMRRHRKQPY…GASEGPSPLW (161 aa)) are cytoplasmic.

The protein localises to the cell membrane. Cadherins are calcium-dependent cell adhesion proteins. They preferentially interact with themselves in a homophilic manner in connecting cells; cadherins may thus contribute to the sorting of heterogeneous cell types. The sequence is that of Cadherin-20 (Cdh20) from Rattus norvegicus (Rat).